The primary structure comprises 247 residues: Ras-like protein family member 11B (247 aa).

The interval 29-247 (ASSRVIKIAV…SAKVRTATSV (219 aa)) is small GTPase-like. Residues 40-47 (GGSGVGKT), 87-91 (DTPGV), and 152-155 (NKAD) each bind GTP. The disordered stretch occupies residues 205–228 (QNTGTPERRKNSLIPRPKSPNMQD).

This sequence belongs to the small GTPase superfamily. Ras family.

The catalysed reaction is GTP + H2O = GDP + phosphate + H(+). In Xenopus tropicalis (Western clawed frog), this protein is Ras-like protein family member 11B.